The sequence spans 202 residues: Protein EMBRYO DEFECTIVE 514 (202 aa).

Disordered regions lie at residues 1–69 (MAEE…PVKL) and 168–202 (MKTP…RFRR). The residue at position 2 (Ala-2) is an N-acetylalanine. 2 stretches are compositionally biased toward basic and acidic residues: residues 33 to 42 (ETGDEKRERE) and 51 to 65 (GESK…EKSG). Residues 174–202 (NGNGHGGGRGGGGGRRGGRGGGRGGRFRR) show a composition bias toward gly residues.

Expressed in leaves, flowers and embryos at globular stage.

It localises to the nucleus. Its function is as follows. May play a role in ribosome biogenesis and in determining the rate of cell division. Involved in a process essential for nuclear and nucleolar functions. This is Protein EMBRYO DEFECTIVE 514 from Arabidopsis thaliana (Mouse-ear cress).